The primary structure comprises 314 residues: Olfactory receptor 5B17 (314 aa).

Residues 1-23 (MENNTEVSEFILLGLTNAPELQV) are Extracellular-facing. Asparagine 3 is a glycosylation site (N-linked (GlcNAc...) asparagine). Residues 24–44 (PLFIMFTLIYLITLTGNLGMI) form a helical membrane-spanning segment. Residues 45–52 (ILILLDSH) lie on the Cytoplasmic side of the membrane. The chain crosses the membrane as a helical span at residues 53-73 (LHTPMYFFLSNLSLAGIGYSS). The Extracellular portion of the chain corresponds to 74-97 (AVTPKVLTGLLIEDKAISYSACAA). Cysteines 95 and 187 form a disulfide. Residues 98 to 118 (QMFFCAVFATVENYLLSSMAY) form a helical membrane-spanning segment. Topologically, residues 119–137 (DRYAAVCNPLHYTTTMTTR) are cytoplasmic. The helical transmembrane segment at 138–158 (VCACLAIGCYVIGFLNASIQI) threads the bilayer. Residues 159–194 (GDTFRLSFCMSNVIHHFFCDKPAVITLTCSEKHISE) lie on the Extracellular side of the membrane. The chain crosses the membrane as a helical span at residues 195-215 (LILVLISSFNVFFALLVTLIS). Residues 216-235 (YLFILITILKRHTGKGYQKP) are Cytoplasmic-facing. A helical transmembrane segment spans residues 236–256 (LSTCGSHLIAIFLFYITVIIM). Over 257-269 (YIRPSSSHSMDTD) the chain is Extracellular. A helical membrane pass occupies residues 270-290 (KIASVFYTMIIPMLSPIVYTL). Residues 291–314 (RNKDVKNAFMKVVEKAKYSLDSVF) lie on the Cytoplasmic side of the membrane.

It belongs to the G-protein coupled receptor 1 family.

It is found in the cell membrane. Odorant receptor. The polypeptide is Olfactory receptor 5B17 (OR5B17) (Homo sapiens (Human)).